Reading from the N-terminus, the 485-residue chain is Choline/ethanolamine transporter flvcr2b (485 aa).

At 1-46 (MDTRFNDINRVKMGDESKSVDGEVNDNTYYSKTDAEVNFEHRYTTP) the chain is on the cytoplasmic side. Residues 47-71 (ETRLYKKRWVIVCLFSSYSLCNSYQ) traverse the membrane as a helical segment. Choline is bound by residues Asn-68 and Trp-72. Residues 72–89 (WIQYGIINNIFMRFYGVD) are Extracellular-facing. A helical transmembrane segment spans residues 90–117 (SFTIDWMSMIYMLTYIPLIFPVSWLLDK). The Cytoplasmic portion of the chain corresponds to 118 to 119 (KG). The helical transmembrane segment at 120–139 (LRVIALVAAALNCAGTWIKV) threads the bilayer. Over 140–146 (ASARPDL) the chain is Extracellular. The helical transmembrane segment at 147–175 (FPVTFLGQFTCSVAQVFILGMPSRIASVW) threads the bilayer. Choline is bound by residues Gln-161 and Leu-165. Over 176-180 (FGSDE) the chain is Cytoplasmic. The chain crosses the membrane as a helical span at residues 181-206 (VSTACSIGVFGNQLGIAIGFLVPPIL). Residues 207 to 211 (VPNVD) are Extracellular-facing. The chain crosses the membrane as a helical span at residues 212 to 241 (DLDELAAHIRVMFYITAGVATFLFVLVVIV). The Cytoplasmic portion of the chain corresponds to 242-277 (FQERPEIPPTLAQAAARRISPESYSYTASILRLLRN). A helical transmembrane segment spans residues 278 to 308 (KAFILLVITYGLNVGCFYAVSTLLNRMIIEH). Tyr-295 contributes to the choline binding site. The Extracellular segment spans residues 309–312 (YPGE). A helical membrane pass occupies residues 313 to 341 (EVNAGRIGLTIVVAGMVGSLICGIWLDRS). At 342-343 (KT) the chain is on the cytoplasmic side. The helical transmembrane segment at 344 to 366 (YKQTTLAVYLMSLMGLVIYAFTL) threads the bilayer. Topologically, residues 367–369 (DLH) are extracellular. A helical transmembrane segment spans residues 370 to 399 (HLWVVFITAGALGFFMTGYLPLGFEFAVEL). Over 400 to 407 (TYPESEGT) the chain is Cytoplasmic. Residues 408–433 (SSGLLNCSAQVFGIIFTICQGKIMDS) form a helical membrane-spanning segment. Gln-417 serves as a coordination point for choline. The Extracellular segment spans residues 434–435 (FG). A helical transmembrane segment spans residues 436–458 (TLAGNLFLCAFLLIGTIITGCIK). The Cytoplasmic portion of the chain corresponds to 459-485 (SDLRRQLANQQAQTADHLDTSPTQTRF).

This sequence belongs to the major facilitator superfamily. Feline leukemia virus subgroup C receptor (TC 2.A.1.28.1) family.

It localises to the cell membrane. The protein resides in the mitochondrion membrane. Its subcellular location is the endoplasmic reticulum membrane. It catalyses the reaction choline(out) = choline(in). The catalysed reaction is ethanolamine(in) = ethanolamine(out). It carries out the reaction heme b(in) = heme b(out). Functionally, choline uniporter that specifically mediates choline uptake at the blood-brain-barrier. Responsible for the majority of choline uptake across the blood-brain-barrier from the circulation into the brain. Choline, a nutrient critical for brain development, is a precursor of phosphatidylcholine, as well as betaine. Also mediates transport of ethanolamine. Choline and ethanolamine transport is not coupled with proton transport and is exclusively driven by the choline gradient across the plasma membrane. Also acts as a heme b transporter. This chain is Choline/ethanolamine transporter flvcr2b, found in Danio rerio (Zebrafish).